A 245-amino-acid chain; its full sequence is Fibroblast growth factor 13 (245 aa).

Residues 1-36 (MAAAIASSLIRQKRQAREREKSNACKCVSSPSKGKT) form a disordered region. The interval 1 to 62 (MAAAIASSLI…GSKKRRRRRP (62 aa)) is mediates targeting to the nucleus. The mediates interaction with sodium channels stretch occupies residues 67–201 (KGIVTKLYSR…AHFLPKPLKV (135 aa)). Ser-208 carries the post-translational modification Phosphoserine. The segment at 213-245 (TEFSRSGSGTPTKSRSVSGVLNGGKSMSHNEST) is disordered. Residues 215-245 (FSRSGSGTPTKSRSVSGVLNGGKSMSHNEST) are compositionally biased toward polar residues.

This sequence belongs to the heparin-binding growth factors family. As to quaternary structure, interacts with SCN8A; regulates SCN8A activity. Interacts with SCN1A; may regulate SCN1A activity. Interacts with SCN5A; the interaction is direct and may regulate SNC5A density at membranes and function. May also interact with SCN2A and SCN11A. Interacts with MAPK8IP2; may regulate the MAPK8IP2 scaffolding activity. Post-translationally, may be phosphorylated. As to expression, ubiquitously expressed. Predominantly expressed in the nervous system.

The protein localises to the nucleus. It is found in the cytoplasm. The protein resides in the cell projection. It localises to the filopodium. Its subcellular location is the growth cone. The protein localises to the dendrite. It is found in the cell membrane. The protein resides in the sarcolemma. In terms of biological role, microtubule-binding protein which directly binds tubulin and is involved in both polymerization and stabilization of microtubules. Through its action on microtubules, may participate in the refinement of axons by negatively regulating axonal and leading processes branching. Plays a crucial role in neuron polarization and migration in the cerebral cortex and the hippocampus. Regulates voltage-gated sodium channel transport and function. May also play a role in MAPK signaling. Required for the development of axonal initial segment-targeting inhibitory GABAergic synapses made by chandelier neurons. In Homo sapiens (Human), this protein is Fibroblast growth factor 13.